We begin with the raw amino-acid sequence, 595 residues long: MTSPLCRAASANALPPQDQASTPSSRVKGREASGKPSHLRGKGTAQAWTPGRSKGGSFHRGAGKPSVHSQVAELHKKIQLLEGDRKAFFESSQWNIKKNQETISQLRKETKALELKLLDLLKGDEKVVQAVIREWKWEKPYLKNRTGQALEHLDHRLREKVKQQNALRHQVVLRQRRLEELQLQHSLRLLEMAEAQNRHTEVAKTMRNLENRLEKAQMKAQEAEHITSVYLQLKAYLMDESLNLENRLDSMEAEVVRTKHELEALHVVNQEALNARDIAKNQLQYLEETLVRERKKRERYISECKKRAEEKKLENERMERKTHREHLLLQSDDTIQDSLHAKEEELRQRWSMYQMEVIFGKVKDATGTDETHSLVRRFLAQGDTFAQLETLKSENEQTLVRLKQEKQQLQRELEDLKYSGEATLVSQQKLQAEAQERLKKEERRHAEAKDQLERALRAMQVAKDSLEHLASKLIHITVEDGRFAGKELDPQADNYVPNLLGLVEEKLLKLQAQLQGHDVQEMLCHIANREFLASLEGRLPEYNTRIALPLATSKDKFFDEESEEEDNEVVTRASLKIRSQKLIESHKKHRRSRRS.

Positions 1-69 (MTSPLCRAAS…RGAGKPSVHS (69 aa)) are disordered. Coiled-coil stretches lie at residues 94–327 (WNIK…REHL) and 385–473 (FAQL…ASKL).

Component of the outer dynein arm-docking complex along with ODAD1, ODAD2, ODAD4 and CLXN. Interacts with ODAD1. Interacts with PIERCE1 and PIERCE2; the interactions link the outer dynein arms docking complex (ODA-DC) to the internal microtubule inner proteins (MIP) in cilium axoneme.

The protein localises to the cytoplasm. It localises to the cytoskeleton. Its subcellular location is the cilium basal body. The protein resides in the microtubule organizing center. It is found in the centrosome. The protein localises to the centriole. It localises to the cilium axoneme. Its function is as follows. Component of the outer dynein arm-docking complex (ODA-DC) that mediates outer dynein arms (ODA) binding onto the doublet microtubule. Involved in mediating assembly of both ODAs and their axonemal docking complex onto ciliary microtubules. The protein is Outer dynein arm-docking complex subunit 3 of Homo sapiens (Human).